A 262-amino-acid chain; its full sequence is MSRIHPTAIIEPGAQLHETVEVGPYAIVGSNVTIGARTTIGSHSVIEGHTTIGEDNRIGHYASVGGRPQDMKYKDEPTRLVIGDRNTIREFTTIHTGTVQDAGVTTLGDDNWIMAYVHIGHDCRVGSHVVLSSNAQMAGHVEIGDWAIVGGMSGVHQYVRIGAHSMLGGASALVQDIPPFVIAAGNKAEPHGINVEGLRRRGFSPDAISALRSAYRILYKNSLSLEEAKVQLSELAQAGGDGDAAVKALVDFVESSQRGIIR.

It belongs to the transferase hexapeptide repeat family. LpxA subfamily. As to quaternary structure, homotrimer.

It localises to the cytoplasm. The enzyme catalyses a (3R)-hydroxyacyl-[ACP] + UDP-N-acetyl-alpha-D-glucosamine = a UDP-3-O-[(3R)-3-hydroxyacyl]-N-acetyl-alpha-D-glucosamine + holo-[ACP]. Its pathway is glycolipid biosynthesis; lipid IV(A) biosynthesis; lipid IV(A) from (3R)-3-hydroxytetradecanoyl-[acyl-carrier-protein] and UDP-N-acetyl-alpha-D-glucosamine: step 1/6. Functionally, involved in the biosynthesis of lipid A, a phosphorylated glycolipid that anchors the lipopolysaccharide to the outer membrane of the cell. The sequence is that of Acyl-[acyl-carrier-protein]--UDP-N-acetylglucosamine O-acyltransferase from Burkholderia thailandensis (strain ATCC 700388 / DSM 13276 / CCUG 48851 / CIP 106301 / E264).